Consider the following 1219-residue polypeptide: A disintegrin and metalloproteinase with thrombospondin motifs 18 (1219 aa).

Positions 1–47 are cleaved as a signal peptide; it reads MECALLCLCALRAAGPGPPWGPAGLGRLAKALQLCCFCCASVAVALA. Residues 48–284 constitute a propeptide that is removed on maturation; sequence SDSGSSGGSG…EYGGTGRPRR (237 aa). N-linked (GlcNAc...) asparagine glycans are attached at residues N151 and N190. The tract at residues 217 to 248 is disordered; sequence YPGSQRTYPGHSPSHTPPASQSQEPEYSHRRW. Positions 218–241 are enriched in polar residues; the sequence is PGSQRTYPGHSPSHTPPASQSQEP. Residues 293-498 enclose the Peptidase M12B domain; it reads LNVETLVVAD…PQAGCLVDEP (206 aa). Disulfide bonds link C369/C420, C395/C402, C414/C493, C453/C477, C521/C546, C532/C553, C541/C572, C566/C577, C601/C638, C605/C643, and C616/C628. Position 436 (H436) interacts with Zn(2+). Residue E437 is part of the active site. 2 residues coordinate Zn(2+): H440 and H446. In terms of domain architecture, TSP type-1 1 spans 589-644; that stretch reads HGQWSAWSKWSECSRTCGGGVKFQERHCSNPKPQYGGKYCPGSSRIYKLCNINPCP. N-linked (GlcNAc...) asparagine glycans are attached at residues N745, N838, N865, and N909. TSP type-1 domains are found at residues 931–990, 991–1049, 1052–1116, and 1121–1176; these read CPAY…NSHA, CPPE…GRCP, NRLQ…RTCP, and AVAS…NFCP. The 38-residue stretch at 1182–1219 folds into the PLAC domain; it reads DDPSCVDFFSWCHLVPQHGVCNHKFYGKQCCRSCTRKS.

It depends on Zn(2+) as a cofactor. Post-translationally, the precursor is cleaved by a furin endopeptidase. Glycosylated. Can be O-fucosylated by POFUT2 on a serine or a threonine residue found within the consensus sequence C1-X(2)-(S/T)-C2-G of the TSP type-1 repeat domains where C1 and C2 are the first and second cysteine residue of the repeat, respectively. Fucosylated repeats can then be further glycosylated by the addition of a beta-1,3-glucose residue by the glucosyltransferase, B3GALTL. Fucosylation mediates the efficient secretion of ADAMTS family members. Can also be C-glycosylated with one or two mannose molecules on tryptophan residues within the consensus sequence W-X-X-W of the TPRs, and N-glycosylated. These other glycosylations can also facilitate secretion.

It is found in the secreted. Its subcellular location is the extracellular space. The protein localises to the extracellular matrix. The sequence is that of A disintegrin and metalloproteinase with thrombospondin motifs 18 (Adamts18) from Mus musculus (Mouse).